The primary structure comprises 581 residues: Multicopper oxidase LPR1 (581 aa).

Residues 1–28 form the signal peptide; it reads MESLLCRRRIKRVMVLIIALTWLRSTCG. Cu cation is bound by residues histidine 148, histidine 150, histidine 196, and histidine 198. N-linked (GlcNAc...) asparagine glycans are attached at residues asparagine 254, asparagine 298, asparagine 386, and asparagine 458. Residues 283 to 352 form the Plastocyanin-like domain; that stretch reads PRLNVRRRKY…DVVVDFYKSP (70 aa). Histidine 464, histidine 467, and histidine 469 together coordinate Cu cation. N-linked (GlcNAc...) asparagine glycosylation is present at asparagine 546. Cu cation-binding residues include histidine 562, cysteine 563, histidine 564, histidine 568, and methionine 573.

The protein belongs to the multicopper oxidase family. Requires Cu cation as cofactor.

Its subcellular location is the endoplasmic reticulum membrane. Its function is as follows. Multicopper oxidase that may be involved in copper homeostasis and oxidative stress response, and that is necessary for root growth inhibition by low phosphate conditions. Functions together with LPR2 and PDR2 in a common pathway that adjusts root meristem activity to phosphate availability. Oxidizes the substrate 2,2'-azinobis-(3-ethylbenzthiazoline-6-sulphonate) in vitro. This is Multicopper oxidase LPR1 (LPR1) from Arabidopsis thaliana (Mouse-ear cress).